The chain runs to 422 residues: ATP phosphoribosyltransferase regulatory subunit (422 aa).

The protein belongs to the class-II aminoacyl-tRNA synthetase family. HisZ subfamily. As to quaternary structure, heteromultimer composed of HisG and HisZ subunits.

Its subcellular location is the cytoplasm. It functions in the pathway amino-acid biosynthesis; L-histidine biosynthesis; L-histidine from 5-phospho-alpha-D-ribose 1-diphosphate: step 1/9. Its function is as follows. Required for the first step of histidine biosynthesis. May allow the feedback regulation of ATP phosphoribosyltransferase activity by histidine. In Clostridium botulinum (strain 657 / Type Ba4), this protein is ATP phosphoribosyltransferase regulatory subunit.